Here is a 763-residue protein sequence, read N- to C-terminus: Autophagy-related protein 18f (763 aa).

2 WD repeats span residues Ala-345 to Arg-385 and Phe-402 to Ala-441. Over residues Asn-701–Thr-711 the composition is skewed to polar residues. The disordered stretch occupies residues Asn-701–Asp-763. 2 stretches are compositionally biased toward basic and acidic residues: residues Gln-712–Glu-725 and Pro-741–Ser-754.

Belongs to the WD repeat PROPPIN family. In terms of assembly, component of the PI(3,5)P2 regulatory complex at least composed of ATG18, SAC/FIG4, FAB1 and VAC14. Expressed in roots, flowers and leaves.

Its subcellular location is the preautophagosomal structure membrane. It is found in the vacuole membrane. The PI(3,5)P2 regulatory complex regulates both the synthesis and turnover of phosphatidylinositol 3,5-bisphosphate (PtdIns(3,5)P2). Required for autophagy. This chain is Autophagy-related protein 18f (ATG18F), found in Arabidopsis thaliana (Mouse-ear cress).